The sequence spans 298 residues: dTDP-4-dehydrorhamnose reductase (298 aa).

Residues 10–12 (GQV), 35–36 (DL), and 59–61 (AYT) contribute to the NADH site. NADPH-binding positions include 11–12 (QV), 35–36 (DL), 59–61 (AYT), and Tyr98. Residue 100 to 101 (TD) coordinates dTDP-beta-L-rhamnose. Positions 124 and 128 each coordinate NADH. Positions 124 and 128 each coordinate NADPH. Tyr124 acts as the Proton donor/acceptor in catalysis. Trp149 lines the dTDP-beta-L-rhamnose pocket.

Belongs to the dTDP-4-dehydrorhamnose reductase family. As to quaternary structure, homodimer. Mg(2+) is required as a cofactor.

It carries out the reaction dTDP-beta-L-rhamnose + NADP(+) = dTDP-4-dehydro-beta-L-rhamnose + NADPH + H(+). Its pathway is carbohydrate biosynthesis; dTDP-L-rhamnose biosynthesis. The protein operates within bacterial outer membrane biogenesis; LPS O-antigen biosynthesis. Involved in the biosynthesis of the dTDP-L-rhamnose which is an important component of lipopolysaccharide (LPS). Catalyzes the reduction of dTDP-6-deoxy-L-lyxo-4-hexulose to yield dTDP-L-rhamnose. The chain is dTDP-4-dehydrorhamnose reductase from Burkholderia thailandensis (strain ATCC 700388 / DSM 13276 / CCUG 48851 / CIP 106301 / E264).